The sequence spans 300 residues: Merozoite surface protein 2 (300 aa).

The signal sequence occupies residues 1-20 (MKVIKTLSIINFFIFVTFNI). N-linked (GlcNAc...) asparagine glycosylation is found at Asn22 and Asn36. The segment at 44–226 (EESKPPTGAV…EQTESPELQS (183 aa)) is polymorphic region. A 1; inverted repeat occupies 51–58 (GAVAGSGA). Residues 51-110 (GAVAGSGAGAGSGAGAVAGSGAGAVAGSGAGAVAGSGAGAVAGSGAGAVAGSGAVAGSGA) form a 7 X 8 AA tandem repeats of G-S-G-A-G-A-V-A region. Repeat copies occupy residues 61–68 (GSGAGAVA), 69–76 (GSGAGAVA), 77–84 (GSGAGAVA), 85–92 (GSGAGAVA), and 93–100 (GSGAGAVA). One copy of the 7; inverted repeat lies at 103-110 (GAVAGSGA). A disordered region spans residues 111–261 (GNGANPGADA…DSQKECTDGN (151 aa)). Residues 123-148 (SPSTPATTTTTTTTNDAEASTSTSSE) show a composition bias toward low complexity. Positions 149–165 (NRNHNNAETNPKGKGEV) are enriched in basic and acidic residues. 2 stretches are compositionally biased toward polar residues: residues 167–193 (KPNQANKETQNNSNVQQDSQTKSNVPR) and 200–228 (KSPTAQPEQAENSAPTAEQTESPELQSAP). N-linked (GlcNAc...) asparagine glycosylation occurs at Asn177. The N-linked (GlcNAc...) asparagine glycan is linked to Asn249. Cys257 and Cys265 form a disulfide bridge. 2 N-linked (GlcNAc...) asparagine glycosylation sites follow: Asn273 and Asn274. Residue Asn274 is the site of GPI-anchor amidated asparagine attachment. Positions 275–300 (SSNIASINKFVVLISATLVLSFAIFI) are cleaved as a propeptide — removed in mature form.

Its subcellular location is the cell membrane. Its function is as follows. May play a role in the merozoite attachment to the erythrocyte. This is Merozoite surface protein 2 from Plasmodium falciparum (isolate imr143).